The primary structure comprises 102 residues: RNA-binding protein Hfq (102 aa).

The Sm domain occupies 9 to 68 (DPFLNALRRERVPVSIYLVNGIKLQGQIESFDQFVILLKNTVSQMVYKHAISTVVPSRPV). The disordered stretch occupies residues 63 to 102 (VPSRPVSHHSNNAGGGTSNNYHHGSNAQGSGAQQDSEETE). The segment covering 70-96 (HHSNNAGGGTSNNYHHGSNAQGSGAQQ) has biased composition (polar residues).

It belongs to the Hfq family. In terms of assembly, homohexamer.

Functionally, RNA chaperone that binds small regulatory RNA (sRNAs) and mRNAs to facilitate mRNA translational regulation in response to envelope stress, environmental stress and changes in metabolite concentrations. Also binds with high specificity to tRNAs. In Salmonella arizonae (strain ATCC BAA-731 / CDC346-86 / RSK2980), this protein is RNA-binding protein Hfq.